The chain runs to 464 residues: 3-ketoacyl-CoA synthase 19 (464 aa).

Residues 3–25 (LFSLSSLLLLSTLFVFYIFKFVF) form a helical membrane-spanning segment. The FAE domain maps to 24 to 318 (VFKRRNQRNC…AIVRALKRRT (295 aa)). Residues cysteine 172, histidine 251, histidine 339, histidine 343, histidine 372, and asparagine 376 contribute to the active site.

The protein belongs to the thiolase-like superfamily. Chalcone/stilbene synthases family. In terms of tissue distribution, expressed in siliques.

Its subcellular location is the membrane. It carries out the reaction a very-long-chain acyl-CoA + malonyl-CoA + H(+) = a very-long-chain 3-oxoacyl-CoA + CO2 + CoA. It functions in the pathway lipid metabolism; fatty acid biosynthesis. In Arabidopsis thaliana (Mouse-ear cress), this protein is 3-ketoacyl-CoA synthase 19.